The sequence spans 649 residues: Lipoteichoic acid synthase 2 (649 aa).

Over 1 to 9 (MKTFIKERG) the chain is Cytoplasmic. A helical membrane pass occupies residues 10-30 (LAFFLIAVVLLWIKTYVGYVL). Over 31–42 (NFNLGIDNTIQK) the chain is Extracellular. A helical membrane pass occupies residues 43–63 (ILLFVNPLSSSLFFLGFGLLF). The Cytoplasmic segment spans residues 64–69 (KKKLQQ). Residues 70-90 (TAIIVIHFLMSFLLYANIVYY) traverse the membrane as a helical segment. Topologically, residues 91 to 118 (RFFNDFITIPVIMQAKTNGGQLGDSAFS) are extracellular. Residues 119–139 (LMRPTDAFYFIDTIILIILAI) traverse the membrane as a helical segment. Residues 140-151 (KVNKPAETSSKK) are Cytoplasmic-facing. A helical transmembrane segment spans residues 152-172 (SFRIIFASSILVFLINLAVAE). The Extracellular portion of the chain corresponds to 173-649 (SDRPELLTRS…SETSKDNEDK (477 aa)). Residues E253 and T297 each contribute to the Mn(2+) site. Residue T297 is part of the active site. A substrate-binding site is contributed by H412. Positions 471 and 472 each coordinate Mn(2+). Residues 622-649 (FKKVNPSDYDYTKHDEDSSETSKDNEDK) are disordered. The segment covering 631-649 (DYTKHDEDSSETSKDNEDK) has biased composition (basic and acidic residues).

This sequence belongs to the LTA synthase family. In terms of processing, proteolytically cleaved.

It is found in the cell membrane. It localises to the secreted. Its pathway is cell wall biogenesis; lipoteichoic acid biosynthesis. In terms of biological role, catalyzes the polymerization of lipoteichoic acid (LTA) polyglycerol phosphate, a reaction that presumably uses phosphatidylglycerol (PG) as substrate. In Bacillus subtilis (strain 168), this protein is Lipoteichoic acid synthase 2 (ltaS2).